The following is a 217-amino-acid chain: UPF0711 protein C18orf21 homolog (217 aa).

Ser-126 carries the phosphoserine modification. A phosphothreonine mark is found at Thr-130 and Thr-139. The disordered stretch occupies residues 131 to 190 (AANKASPKTPKRTAPGSANLGQSTNGSKGKSPSLTIRTPTSGQSTPICSSRNGSKRKKHF). Residues 149-182 (NLGQSTNGSKGKSPSLTIRTPTSGQSTPICSSRN) show a composition bias toward polar residues.

This sequence belongs to the UPF0711 family.

The protein is UPF0711 protein C18orf21 homolog of Mus musculus (Mouse).